A 198-amino-acid polypeptide reads, in one-letter code: Dephospho-CoA kinase (198 aa).

The region spanning 3–198 (VVGLTGGIGA…HRRYSLLAAA (196 aa)) is the DPCK domain. 11-16 (GAGKST) is an ATP binding site.

Belongs to the CoaE family.

It localises to the cytoplasm. The catalysed reaction is 3'-dephospho-CoA + ATP = ADP + CoA + H(+). It functions in the pathway cofactor biosynthesis; coenzyme A biosynthesis; CoA from (R)-pantothenate: step 5/5. Functionally, catalyzes the phosphorylation of the 3'-hydroxyl group of dephosphocoenzyme A to form coenzyme A. The sequence is that of Dephospho-CoA kinase from Methylococcus capsulatus (strain ATCC 33009 / NCIMB 11132 / Bath).